Reading from the N-terminus, the 341-residue chain is uncharacterized protein (341 aa).

It belongs to the cycloisomerase 2 family.

This is an uncharacterized protein from Lactococcus lactis subsp. lactis (strain IL1403) (Streptococcus lactis).